Reading from the N-terminus, the 354-residue chain is Uroporphyrinogen decarboxylase (354 aa).

Substrate-binding positions include arginine 27–arginine 31, aspartate 77, tyrosine 153, threonine 208, and histidine 326.

It belongs to the uroporphyrinogen decarboxylase family. In terms of assembly, homodimer.

It localises to the cytoplasm. It catalyses the reaction uroporphyrinogen III + 4 H(+) = coproporphyrinogen III + 4 CO2. The protein operates within porphyrin-containing compound metabolism; protoporphyrin-IX biosynthesis; coproporphyrinogen-III from 5-aminolevulinate: step 4/4. Catalyzes the decarboxylation of four acetate groups of uroporphyrinogen-III to yield coproporphyrinogen-III. The sequence is that of Uroporphyrinogen decarboxylase from Neisseria gonorrhoeae (strain NCCP11945).